The chain runs to 207 residues: Small ribosomal subunit protein uS4c (207 aa).

In terms of domain architecture, S4 RNA-binding spans 92-156 (MRLDNILFRL…YQSIITKRIE (65 aa)).

This sequence belongs to the universal ribosomal protein uS4 family. Part of the 30S ribosomal subunit. Contacts protein S5. The interaction surface between S4 and S5 is involved in control of translational fidelity.

It is found in the plastid. Its subcellular location is the chloroplast. In terms of biological role, one of the primary rRNA binding proteins, it binds directly to 16S rRNA where it nucleates assembly of the body of the 30S subunit. Its function is as follows. With S5 and S12 plays an important role in translational accuracy. This is Small ribosomal subunit protein uS4c (rps4) from Equisetum arvense (Field horsetail).